The sequence spans 283 residues: 4-diphosphocytidyl-2-C-methyl-D-erythritol kinase (283 aa).

K10 is an active-site residue. 99–109 serves as a coordination point for ATP; that stretch reads PMGGGLGGGSS. D141 is a catalytic residue.

The protein belongs to the GHMP kinase family. IspE subfamily. As to quaternary structure, homodimer.

The enzyme catalyses 4-CDP-2-C-methyl-D-erythritol + ATP = 4-CDP-2-C-methyl-D-erythritol 2-phosphate + ADP + H(+). It participates in isoprenoid biosynthesis; isopentenyl diphosphate biosynthesis via DXP pathway; isopentenyl diphosphate from 1-deoxy-D-xylulose 5-phosphate: step 3/6. Functionally, catalyzes the phosphorylation of the position 2 hydroxy group of 4-diphosphocytidyl-2C-methyl-D-erythritol. The polypeptide is 4-diphosphocytidyl-2-C-methyl-D-erythritol kinase (Escherichia coli O81 (strain ED1a)).